Reading from the N-terminus, the 416-residue chain is Squamosa promoter-binding-like protein 8 (416 aa).

A disordered region spans residues 11–51; that stretch reads SSCDDFGYNATPPPPPSLLPIMDQDGGGGSIQRDHHQHHNH. The SBP-type zinc finger occupies 182-260; that stretch reads PPRCQAEGCK…ADHNRRRRKS (79 aa). Residues C185, C190, C207, H210, C227, C230, H234, and C246 each coordinate Zn(2+). The Bipartite nuclear localization signal motif lies at 243-259; the sequence is KKSCRKRLADHNRRRRK. The interval 250–299 is disordered; that stretch reads LADHNRRRRKSKPSDGEHSGEKRRAQANKSAATKDKAGSSSKNAGIGDGF. The segment covering 261–273 has biased composition (basic and acidic residues); sequence KPSDGEHSGEKRR.

In terms of tissue distribution, expressed in stems, leaf sheaths, and young panicles. Weakly expressed in ligules, auricles, and leaf sheaths at the basal region.

Its subcellular location is the nucleus. Functionally, probable transcription factor that plays an important role in building the laminar joint between leaf blade and leaf sheath boundary, thereby controlling ligule and auricle development. This Oryza sativa subsp. japonica (Rice) protein is Squamosa promoter-binding-like protein 8 (SPL8).